A 667-amino-acid chain; its full sequence is Cylicin-1 (667 aa).

2 disordered regions span residues 121-251 and 275-634; these read PYTH…SSNV and SQNN…ILPS. The span at 129–172 shows a compositional bias: basic and acidic residues; that stretch reads KKAESKKYKDDKKETALKKISKKDTGPHEVDEKPKRRNKADKTP. The span at 173-182 shows a compositional bias: low complexity; that stretch reads SKSSHGSQLS. The segment covering 187–197 has biased composition (basic and acidic residues); the sequence is SKSETNPESKD. The segment covering 223–237 has biased composition (low complexity); it reads STSTKKYSKSSKNNS. Over residues 238 to 251 the composition is skewed to polar residues; the sequence is DAVSETCSKNSSNV. 9 stretches are compositionally biased toward basic and acidic residues: residues 284 to 326, 345 to 371, 380 to 394, 417 to 431, 438 to 464, 483 to 506, 521 to 533, 549 to 558, and 583 to 593; these read KKDA…KDTE, SKKD…DAKK, SKKD…KDAE, GDSK…KDAV, SKKD…KEST, SKKD…KKAT, KKTEMFKSSD, and DSKKDAVEPKR. 9 tandem repeats follow at residues 287–305, 306–337, 338–368, 369–405, 406–442, 443–475, 476–516, 517–547, and 548–569. Residues 287–569 form a 9 X approximate tandem repeats region; sequence AKKDAKGKGS…ESEESLFKPG (283 aa). Positions 624-633 are enriched in pro residues; it reads PLPPCEPILP.

In terms of assembly, interacts with proteins of spermatozoa head including ACTL7A, CCIN, FAM209A and SPACA1; the interactions may be necessary for proper acrosome attachment to the nuclear envelope. As to expression, testis.

The protein resides in the cytoplasm. It is found in the cytoskeleton. The protein localises to the perinuclear theca. Its subcellular location is the calyx. Plays a role in the establishment of normal sperm morphology during spermatogenesis and is required for acrosome attachment to the nuclear envelope. The protein is Cylicin-1 (CYLC1) of Bos taurus (Bovine).